Consider the following 125-residue polypeptide: Probable 4-amino-4-deoxy-L-arabinose-phosphoundecaprenol flippase subunit ArnF (125 aa).

The Cytoplasmic segment spans residues 1 to 2 (MG). Residues 3–23 (VMWGLISVAIASLAQLSLGFA) traverse the membrane as a helical segment. Over 24 to 33 (MMRLPSIAHP) the chain is Periplasmic. Residues 34 to 54 (LAFISGLGAFNAATLALFAGL) traverse the membrane as a helical segment. Residues 55 to 76 (AGYLVSVFCWQKTLHMLALSKA) lie on the Cytoplasmic side of the membrane. A helical transmembrane segment spans residues 77 to 97 (YALLSLSYVLVWVASMLLPGL). The Periplasmic portion of the chain corresponds to 98 to 100 (QGA). The helical transmembrane segment at 101-121 (FSLKAMLGVLCIMAGVMLIFL) threads the bilayer. The Cytoplasmic segment spans residues 122–125 (PARS).

It belongs to the ArnF family. Heterodimer of ArnE and ArnF.

The protein localises to the cell inner membrane. The protein operates within bacterial outer membrane biogenesis; lipopolysaccharide biosynthesis. In terms of biological role, translocates 4-amino-4-deoxy-L-arabinose-phosphoundecaprenol (alpha-L-Ara4N-phosphoundecaprenol) from the cytoplasmic to the periplasmic side of the inner membrane. The protein is Probable 4-amino-4-deoxy-L-arabinose-phosphoundecaprenol flippase subunit ArnF of Salmonella paratyphi A (strain ATCC 9150 / SARB42).